A 235-amino-acid chain; its full sequence is tRNA (guanine-N(1)-)-methyltransferase (235 aa).

S-adenosyl-L-methionine-binding positions include glycine 112 and leucine 132–leucine 137.

The protein belongs to the RNA methyltransferase TrmD family. In terms of assembly, homodimer.

The protein resides in the cytoplasm. It catalyses the reaction guanosine(37) in tRNA + S-adenosyl-L-methionine = N(1)-methylguanosine(37) in tRNA + S-adenosyl-L-homocysteine + H(+). Its function is as follows. Specifically methylates guanosine-37 in various tRNAs. The chain is tRNA (guanine-N(1)-)-methyltransferase from Acaryochloris marina (strain MBIC 11017).